Consider the following 340-residue polypeptide: Cyclic GMP-AMP synthase-like receptor 3 (340 aa).

ATP-binding positions include Ser62 and 74 to 76; that span reads EAD. Mg(2+)-binding residues include Glu74, Asp76, and Asp177. Residues Lys241 and 255–259 contribute to the ATP site; that span reads SYHLK. The Mn(2+) site is built by Asp267 and Asp270.

It belongs to the mab-21 family. It depends on Mg(2+) as a cofactor. Mn(2+) is required as a cofactor.

It catalyses the reaction 2 ATP = 3',3'-c-di-AMP + 2 diphosphate. In terms of biological role, nucleotidyltransferase that catalyzes the formation of cyclic di-AMP (3',3'-c-di-AMP) from 2 molecules of ATP and plays a key role in innate immunity. Acts as a key sensor of double-stranded RNA (dsRNA), the presence of dsRNA in the cytoplasm being a danger signal that triggers the immune responses. Directly binds dsRNA, activating the nucleotidyltransferase activity, leading to synthesis of 3',3'-c-di-AMP, a second messenger that binds to and activates Sting, thereby triggering the immune response via activation of the NF-kappa-B transcription factor. This Stylophora pistillata (Smooth cauliflower coral) protein is Cyclic GMP-AMP synthase-like receptor 3.